The chain runs to 82 residues: Small ribosomal subunit protein bS18 (82 aa).

It belongs to the bacterial ribosomal protein bS18 family. Part of the 30S ribosomal subunit. Forms a tight heterodimer with protein bS6.

Functionally, binds as a heterodimer with protein bS6 to the central domain of the 16S rRNA, where it helps stabilize the platform of the 30S subunit. In Chlamydia pneumoniae (Chlamydophila pneumoniae), this protein is Small ribosomal subunit protein bS18.